Reading from the N-terminus, the 204-residue chain is Holliday junction branch migration complex subunit RuvA (204 aa).

Residues 1–64 (MIGRLRGIIL…EDAQLLYGFN (64 aa)) are domain I. The interval 65 to 142 (NKQERALFRE…KGLNGDLFNN (78 aa)) is domain II. The flexible linker stretch occupies residues 143 to 155 (TGDISLPTASPQT). Positions 156-204 (SDADIEAEAASALVALGYKPQEASRLVSKIAKPGADCETLIRDALRAAL) are domain III.

It belongs to the RuvA family. In terms of assembly, homotetramer. Forms an RuvA(8)-RuvB(12)-Holliday junction (HJ) complex. HJ DNA is sandwiched between 2 RuvA tetramers; dsDNA enters through RuvA and exits via RuvB. An RuvB hexamer assembles on each DNA strand where it exits the tetramer. Each RuvB hexamer is contacted by two RuvA subunits (via domain III) on 2 adjacent RuvB subunits; this complex drives branch migration. In the full resolvosome a probable DNA-RuvA(4)-RuvB(12)-RuvC(2) complex forms which resolves the HJ.

It is found in the cytoplasm. The RuvA-RuvB-RuvC complex processes Holliday junction (HJ) DNA during genetic recombination and DNA repair, while the RuvA-RuvB complex plays an important role in the rescue of blocked DNA replication forks via replication fork reversal (RFR). RuvA specifically binds to HJ cruciform DNA, conferring on it an open structure. The RuvB hexamer acts as an ATP-dependent pump, pulling dsDNA into and through the RuvAB complex. HJ branch migration allows RuvC to scan DNA until it finds its consensus sequence, where it cleaves and resolves the cruciform DNA. The sequence is that of Holliday junction branch migration complex subunit RuvA from Yersinia pseudotuberculosis serotype O:1b (strain IP 31758).